Here is a 237-residue protein sequence, read N- to C-terminus: Cysteine-rich venom protein ENH2 (237 aa).

The N-terminal stretch at 1–18 (MIVFILLSLAAVLQQFVA) is a signal peptide. An SCP domain is found at 37–165 (VDMHNSFRRS…PYNYFYVCQY (129 aa)). 7 disulfides stabilise this stretch: C74/C152, C91/C166, C147/C163, C185/C192, C188/C197, C210/C228, and C219/C232. In terms of domain architecture, ShKT spans 201–237 (CPITNTFTNCDSLLQQNSCEDSYIKTNCGASCFGQDK).

This sequence belongs to the CRISP family. In terms of tissue distribution, expressed by the venom gland.

The protein localises to the secreted. Functionally, blocks contraction of smooth muscle elicited by high potassium-induced depolarization, but does not block caffeine-stimulated contraction. May target voltage-gated calcium channels on smooth muscle. The polypeptide is Cysteine-rich venom protein ENH2 (Pseudoferania polylepis (Macleay's water snake)).